The following is a 508-amino-acid chain: Flagellin (508 aa).

This sequence belongs to the bacterial flagellin family.

It localises to the secreted. The protein localises to the bacterial flagellum. Flagellin is the subunit protein which polymerizes to form the filaments of bacterial flagella. The protein is Flagellin (fliC) of Salmonella oranienberg.